Here is an 858-residue protein sequence, read N- to C-terminus: Protein lines (858 aa).

The disordered stretch occupies residues M1–S102. Composition is skewed to low complexity over residues S20 to S30 and L65 to S102.

It belongs to the protein lines family. In terms of assembly, interacts with drm. Expressed throughout the embryo, including the hindgut, posterior midgut and embryonic epidermis.

Its subcellular location is the cytoplasm. It localises to the nucleus. Has a dual role as a segment polarity protein and as a modulator of the Abd-B protein. Required for Abd-B to activate the transcription of genes (including ems, cut and sal) that are involved in posterior spiracle morphogenesis. Also required for Abd-B to form an eighth abdominal denticle belt. Acts in a hierarchy downstream of drm and upstream of bowl during foregut and hindgut patterning and morphogenesis. Involved in cell rearrangement during elongation of the embryonic hindgut. Required to regulate expression of embryonic hindgut patterning genes in order to establish the large intestine and at least some rectum, and to repress small intestine fate. Required for late wingless (wg)-dependent cell fate specification in the dorsal embryonic epidermis. Acts in concert with wg to regulate expression of wg itself and also to regulate wg-target genes. May have a role in ventral epidermal patterning, independent of wg signaling. The sequence is that of Protein lines from Drosophila melanogaster (Fruit fly).